The sequence spans 399 residues: Argininosuccinate synthase (399 aa).

12-20 (AFSGGLDTS) lines the ATP pocket. Y90 is a binding site for L-citrulline. G120 serves as a coordination point for ATP. Residues T122, N126, and D127 each coordinate L-aspartate. L-citrulline is bound at residue N126. L-citrulline contacts are provided by R130, S175, E260, and Y272.

Belongs to the argininosuccinate synthase family. Type 1 subfamily. As to quaternary structure, homotetramer.

Its subcellular location is the cytoplasm. The enzyme catalyses L-citrulline + L-aspartate + ATP = 2-(N(omega)-L-arginino)succinate + AMP + diphosphate + H(+). It functions in the pathway amino-acid biosynthesis; L-arginine biosynthesis; L-arginine from L-ornithine and carbamoyl phosphate: step 2/3. The protein is Argininosuccinate synthase of Methanothermobacter thermautotrophicus (strain ATCC 29096 / DSM 1053 / JCM 10044 / NBRC 100330 / Delta H) (Methanobacterium thermoautotrophicum).